Consider the following 153-residue polypeptide: Aspartate carbamoyltransferase regulatory chain (153 aa).

4 residues coordinate Zn(2+): Cys-108, Cys-113, Cys-137, and Cys-140.

It belongs to the PyrI family. Contains catalytic and regulatory chains. Zn(2+) serves as cofactor.

Functionally, involved in allosteric regulation of aspartate carbamoyltransferase. This chain is Aspartate carbamoyltransferase regulatory chain, found in Methanosphaera stadtmanae (strain ATCC 43021 / DSM 3091 / JCM 11832 / MCB-3).